A 369-amino-acid polypeptide reads, in one-letter code: ATP-dependent 6-phosphofructokinase (369 aa).

Residues G15, 81-82 (KG), and 108-111 (GDGS) contribute to the ATP site. Position 109 (D109) interacts with Mg(2+). Substrate is bound by residues 132–134 (TID), R169, 176–178 (MGR), E230, R266, and 272–275 (HIQR). Residue D134 is the Proton acceptor of the active site.

Belongs to the phosphofructokinase type A (PFKA) family. Mixed-substrate PFK group III subfamily. In terms of assembly, homodimer or homotetramer. Requires Mg(2+) as cofactor.

The protein resides in the cytoplasm. It catalyses the reaction beta-D-fructose 6-phosphate + ATP = beta-D-fructose 1,6-bisphosphate + ADP + H(+). It functions in the pathway carbohydrate degradation; glycolysis; D-glyceraldehyde 3-phosphate and glycerone phosphate from D-glucose: step 3/4. In terms of biological role, catalyzes the phosphorylation of D-fructose 6-phosphate to fructose 1,6-bisphosphate by ATP, the first committing step of glycolysis. The chain is ATP-dependent 6-phosphofructokinase from Thermosynechococcus vestitus (strain NIES-2133 / IAM M-273 / BP-1).